The following is a 483-amino-acid chain: Proline--tRNA ligase (483 aa).

This sequence belongs to the class-II aminoacyl-tRNA synthetase family. ProS type 3 subfamily. In terms of assembly, homodimer.

The protein localises to the cytoplasm. It carries out the reaction tRNA(Pro) + L-proline + ATP = L-prolyl-tRNA(Pro) + AMP + diphosphate. Catalyzes the attachment of proline to tRNA(Pro) in a two-step reaction: proline is first activated by ATP to form Pro-AMP and then transferred to the acceptor end of tRNA(Pro). This is Proline--tRNA ligase from Mycoplasma genitalium (strain ATCC 33530 / DSM 19775 / NCTC 10195 / G37) (Mycoplasmoides genitalium).